A 1344-amino-acid polypeptide reads, in one-letter code: Protein stu1 (1344 aa).

The HEAT 1 repeat unit spans residues 93–131 (LYPLLVERLGDHKERIRAQAAQSFTDMWLAAPEEVEQCV). The interval 265-292 (HRPVSRAETQASRSVSRLDTHQRPASRM) is disordered. One copy of the HEAT 2 repeat lies at 508–544 (VTFTTRILQHVSGACQDKNVQLRLFAAGWLKTLIQKQ). Disordered stretches follow at residues 606–637 (RSLL…ANGT), 651–847 (AAQK…STPR), 914–945 (LTEN…ESVP), 984–1004 (PVTH…LSSS), and 1031–1054 (SLPH…PSQR). 2 stretches are compositionally biased toward polar residues: residues 691–705 (VRTV…SLSS) and 735–747 (ATDS…NQID). Residues 748-769 (GSPSAAKSKSSTPSLKSVSSTG) show a composition bias toward low complexity. Composition is skewed to polar residues over residues 828–847 (FSVT…STPR) and 914–942 (LTEN…NQDE). Residues 995 to 1004 (SSKPSGLSSS) show a composition bias toward low complexity.

It belongs to the CLASP family. As to quaternary structure, interacts with microtubules.

Its subcellular location is the cytoplasm. It is found in the cytoskeleton. The protein localises to the nucleus. It localises to the spindle. Its function is as follows. Microtubule binding protein that promotes the stabilization of dynamic microtubules. Required for mitotic spindle formation. In Aspergillus fumigatus (strain ATCC MYA-4609 / CBS 101355 / FGSC A1100 / Af293) (Neosartorya fumigata), this protein is Protein stu1 (stu1).